Here is a 649-residue protein sequence, read N- to C-terminus: Epithelial sodium channel subunit gamma (649 aa).

Residues 1 to 55 (MAPGEKIKAKIKKNLPVTGPQAPTIKELMRWYCLNTNTHGCRRIVVSRGRLRRLL) are Cytoplasmic-facing. The helical transmembrane segment at 56-76 (WIGFTLTAVALILWQCALLVF) threads the bilayer. The Extracellular segment spans residues 77-541 (SFYTVSVSIK…GGQLGLWMSC (465 aa)). Cystine bridges form between C100–C283, C207–C214, C260–C267, C372–C457, C394–C453, C398–C449, C407–C434, and C409–C423. Residues 135 to 221 (RKRREAESWN…SDCATYTFSS (87 aa)) form a gating release of inhibition by proteolysis (GRIP); protease-sensitive region that is responsible for the proteolytic activation of the channel region. N209 carries an N-linked (GlcNAc...) asparagine glycan. N497 is a glycosylation site (N-linked (GlcNAc...) asparagine). The chain crosses the membrane as a helical span at residues 542–562 (SVVCVIEIIEVFFIDFFSIIA). At 563–649 (RRQWQKAKEW…LTDTQMLDEL (87 aa)) the chain is on the cytoplasmic side. The PY motif; recruits WW domain-containing proteins and is thereby required for ubiquitination and inhibition of the channel by NEDD4 and NEDD4L signature appears at 623 to 627 (PPPKY).

The protein belongs to the amiloride-sensitive sodium channel (TC 1.A.6) family. SCNN1G subfamily. In terms of assembly, component of the heterotrimeric epithelial sodium channel (ENaC) composed of an alpha/SCNN1A, a beta/SCNN1B and a gamma/SCNN1G subunit. An additional delta/SCNN1D subunit can replace the alpha/SCNN1A subunit to form an alternative channel with specific properties. Interacts with WWP1 (via WW domains). Interacts with WWP2 (via WW domains); inhibits the channel. Interacts with the full-length immature form of PCSK9 (pro-PCSK9); inhibits ENaC by promoting its proteasomal degradation. Interacts with BPIFA1; the interaction is indirect via SCNN1B and inhibits the proteolytic maturation of SCNN1A and SCNN1G and the activation of ENaC. Phosphorylated on serine and threonine residues. Aldosterone and insulin increase the basal level of phosphorylation. In terms of processing, ubiquitinated. Can be ubiquitinated at multiple sites and undergo monoubiquitination and polyubiquitination. Ubiquitination by NEDD4 or NEDD4L inhibits the ENaC channel through endocytosis, intracellular retention and degradation of its individual subunits. Post-translationally, ENaC is activated through the proteolytic maturation of its subunits. Furin cleaves the SCNN1G subunit first, followed by cleavage by prostasin (PRSS8), which results in a stepwise increase in the open probability of the channel due to the release of an inhibitory tract. BPIFA1, which is recruited by the SCNN1B subunit, prevents the proteolytic activation of ENaC. N-glycosylated. N-linked glycans are processed to complex type during ENaC complex assembly and transport to the plasma membrane. As to expression, expressed in kidney (at protein level).

The protein localises to the apical cell membrane. The catalysed reaction is Na(+)(in) = Na(+)(out). Its activity is regulated as follows. Originally identified and characterized by its inhibition by the diuretic drug amiloride. Functionally, this is one of the three pore-forming subunits of the heterotrimeric epithelial sodium channel (ENaC), a critical regulator of sodium balance and fluid homeostasis. ENaC operates in epithelial tissues, where it mediates the electrodiffusion of sodium ions from extracellular fluid through the apical membrane of cells, with water following osmotically. It plays a key role in maintaining sodium homeostasis through electrogenic sodium reabsorption in the kidneys. Additionally, ENaC is essential for airway surface liquid homeostasis, which is crucial for proper mucus clearance. The polypeptide is Epithelial sodium channel subunit gamma (Homo sapiens (Human)).